Consider the following 160-residue polypeptide: Cyclic pyranopterin monophosphate synthase (160 aa).

Residues 77-79 (MCH) and 114-115 (ME) contribute to the substrate site. Asp-129 is an active-site residue.

Belongs to the MoaC family. In terms of assembly, homohexamer; trimer of dimers.

The enzyme catalyses (8S)-3',8-cyclo-7,8-dihydroguanosine 5'-triphosphate = cyclic pyranopterin phosphate + diphosphate. It functions in the pathway cofactor biosynthesis; molybdopterin biosynthesis. Catalyzes the conversion of (8S)-3',8-cyclo-7,8-dihydroguanosine 5'-triphosphate to cyclic pyranopterin monophosphate (cPMP). This Listeria welshimeri serovar 6b (strain ATCC 35897 / DSM 20650 / CCUG 15529 / CIP 8149 / NCTC 11857 / SLCC 5334 / V8) protein is Cyclic pyranopterin monophosphate synthase.